A 273-amino-acid chain; its full sequence is Probable NAD(P)H dehydrogenase (quinone) FQR1-like 2 (273 aa).

Residues 1–60 (MGKGGGCVPSKKKKPATTGDGPGIDDDNDATNAPIQIDDDQTTIDGDRTTATNTGGTTTP) are disordered. Positions 49 to 60 (TTATNTGGTTTP) are enriched in low complexity. The Flavodoxin-like domain maps to 75–263 (IFVVFYSMYG…ALAEHQGNYM (189 aa)). FMN contacts are provided by residues 81–85 (SMYGH), 183–236 (FFVS…SPYG), and His207. Residue Tyr83 participates in NAD(+) binding.

It belongs to the WrbA family. The cofactor is FMN.

It is found in the cell membrane. It catalyses the reaction a quinone + NADH + H(+) = a quinol + NAD(+). The catalysed reaction is a quinone + NADPH + H(+) = a quinol + NADP(+). Catalyzes the transfer of electrons from NADH and NADPH to reduce quinone to the hydroquinone state. This is Probable NAD(P)H dehydrogenase (quinone) FQR1-like 2 from Arabidopsis thaliana (Mouse-ear cress).